A 308-amino-acid polypeptide reads, in one-letter code: Cobalamin biosynthesis protein CobD (308 aa).

Helical transmembrane passes span 1–21 (MEIL…GDPP), 50–70 (FVYG…PVYF), 71–91 (LLDW…AILF), 151–171 (IGDG…PGVM), 202–222 (VLNF…SFFG), and 284–304 (LVLI…VIYF).

It belongs to the CobD/CbiB family.

The protein resides in the cell membrane. It participates in cofactor biosynthesis; adenosylcobalamin biosynthesis. Converts cobyric acid to cobinamide by the addition of aminopropanol on the F carboxylic group. The protein is Cobalamin biosynthesis protein CobD of Dehalococcoides mccartyi (strain CBDB1).